We begin with the raw amino-acid sequence, 137 residues long: ATP synthase epsilon chain, chloroplastic (137 aa).

This sequence belongs to the ATPase epsilon chain family. As to quaternary structure, F-type ATPases have 2 components, CF(1) - the catalytic core - and CF(0) - the membrane proton channel. CF(1) has five subunits: alpha(3), beta(3), gamma(1), delta(1), epsilon(1). CF(0) has three main subunits: a, b and c.

It is found in the plastid. Its subcellular location is the chloroplast thylakoid membrane. In terms of biological role, produces ATP from ADP in the presence of a proton gradient across the membrane. This is ATP synthase epsilon chain, chloroplastic from Pinus thunbergii (Japanese black pine).